The primary structure comprises 365 residues: Probable caffeine synthase 5 (365 aa).

Y18 serves as a coordination point for S-adenosyl-L-homocysteine. T25 serves as a coordination point for caffeine. Positions 61, 66, 98, 99, 134, and 135 each coordinate S-adenosyl-L-homocysteine. Caffeine contacts are provided by Y152, H155, and W156. Mg(2+) is bound by residues N173, D259, F261, and N262. Residue F317 participates in caffeine binding.

It belongs to the methyltransferase superfamily. Type-7 methyltransferase family. Mg(2+) is required as a cofactor.

It functions in the pathway alkaloid biosynthesis. Functionally, may be involved in the biosynthesis of caffeine. The protein is Probable caffeine synthase 5 of Camellia sinensis (Tea plant).